We begin with the raw amino-acid sequence, 339 residues long: Thermospermine synthase ACAULIS5 (339 aa).

The PABS domain maps to 33-270 (CHWYEETIDD…DTWGWVMASD (238 aa)). Residues Gln-62, Glu-117, Asp-137, and 168–169 (DA) each bind S-adenosyl 3-(methylsulfanyl)propylamine. Asp-186 acts as the Proton acceptor in catalysis.

The protein belongs to the spermidine/spermine synthase family. As to expression, highly expressed in stem internodes and roots. Lower levels in young seedlings before flowering and rosette leaves. Expressed in the vascular tissues. Restricted to procambial and/or provascular cells during primary root development and early leaves development.

It catalyses the reaction S-adenosyl 3-(methylsulfanyl)propylamine + spermidine = thermospermine + S-methyl-5'-thioadenosine + H(+). Functionally, required for correct xylem specification through regulation of the lifetime of the xylem elements. Prevents premature death of the xylem vessel elements. The sequence is that of Thermospermine synthase ACAULIS5 (ACL5) from Arabidopsis thaliana (Mouse-ear cress).